A 284-amino-acid polypeptide reads, in one-letter code: MVRYSKLAFRQLVRVYDVDVCFTPMIYAKNFIESEKCRSSELSVCEGDSPLIVQFATDDPFVLSEAAEMVYKCSTGVDLNCGCPKHDVRSKGFGSALLSKPELLADMVRQTRARIPDPDFSVSLKIRINHDIEKTVDLCRKAEAAGVTHLTVHGRTPSQRAEPIDIQALRIVKDSVSVPIIANGGITTREEALFLAEQTGVDGIMAANGLLDNPALFAGHEHTPSDCVENFMRLSREYGLDWLLYHQHLQYMLRPVFSAQQRRVFNELNGRLAIDHFLNNLLDI.

Q54 contacts FMN. Catalysis depends on C83, which acts as the Proton donor. Residues K125, H153, 183 to 185, and 207 to 208 contribute to the FMN site; these read NGG and AN.

It belongs to the Dus family. FMN is required as a cofactor.

Catalyzes the synthesis of dihydrouridine, a modified base found in the D-loop of most tRNAs. This is an uncharacterized protein from Caenorhabditis elegans.